The primary structure comprises 355 residues: Enhancer of mRNA-decapping protein 1 (355 aa).

3 disordered regions span residues 1–146 (MSSD…VDGM), 210–230 (MSQP…SQPM), and 301–330 (NSTA…KSSQ). The segment covering 39 to 49 (AQKQQLPNGEQ) has biased composition (polar residues). Residues 57–67 (KQSRKRGSGRQ) show a composition bias toward basic residues. The segment covering 91-110 (SIPSGSAGSESAQKETSAGQ) has biased composition (polar residues). A compositionally biased stretch (low complexity) spans 123–142 (VPAGGPAGKSSSEPASASSA).

It belongs to the EDC family.

It is found in the cytoplasm. Its function is as follows. mRNA-binding protein which stimulates mRNA decapping. The polypeptide is Enhancer of mRNA-decapping protein 1 (EDC1) (Eremothecium gossypii (strain ATCC 10895 / CBS 109.51 / FGSC 9923 / NRRL Y-1056) (Yeast)).